The following is a 280-amino-acid chain: Shikimate dehydrogenase (NADP(+)) (280 aa).

Residues 15–17 (SLS) and Thr62 each bind shikimate. Lys66 serves as the catalytic Proton acceptor. Shikimate is bound by residues Asn88 and Asp104. NADP(+) is bound by residues 128–132 (GAGGA), 151–156 (NRTEER), and Ile222. Tyr224 serves as a coordination point for shikimate. Gly245 lines the NADP(+) pocket.

This sequence belongs to the shikimate dehydrogenase family. In terms of assembly, homodimer.

The catalysed reaction is shikimate + NADP(+) = 3-dehydroshikimate + NADPH + H(+). It participates in metabolic intermediate biosynthesis; chorismate biosynthesis; chorismate from D-erythrose 4-phosphate and phosphoenolpyruvate: step 4/7. Functionally, involved in the biosynthesis of the chorismate, which leads to the biosynthesis of aromatic amino acids. Catalyzes the reversible NADPH linked reduction of 3-dehydroshikimate (DHSA) to yield shikimate (SA). This chain is Shikimate dehydrogenase (NADP(+)), found in Methanosarcina acetivorans (strain ATCC 35395 / DSM 2834 / JCM 12185 / C2A).